A 664-amino-acid polypeptide reads, in one-letter code: Intraflagellar transport protein 70A2 (664 aa).

TPR repeat units follow at residues 11–44 (DGEFTAVVYRLIRDSRYSEAVQLLSAELQRSPRS), 45–78 (RAGLSLLAYCYYRLQEFELAAECYEQLSQMHPEL), 153–186 (PDGLVNMGCLLYKEGHYEAACSKFFAALQASGYQ), 188–220 (DVSYNLALACYSNRHYAPALKHIANIIERGIRQ), 395–423 (QVQEARHNRDDEVVIKAVNEYDETLEKYI), 424–456 (PVLMAQAKIYWNLENYQMVEKIFRKSVEFCNDH), and 458–491 (VWKLNVAHVLFMQENKYKEAIGFYEPIVKKNYDN). Residues 507 to 534 (YIMTSQNEEAEELMRKIEKEEEQLSYGD) are a coiled coil. Residues 543–576 (CIVNLVIGTLYCAKGNYDFGISRVIKSLEPYHKK) form a TPR 8 repeat.

This sequence belongs to the TTC30/dfy-1/fleer family. As to quaternary structure, interacts wit the IFT B complex component IFT52.

Its subcellular location is the cell projection. It localises to the cilium. Its function is as follows. Required for polyglutamylation of axonemal tubulin. Plays a role in anterograde intraflagellar transport (IFT), the process by which cilia precursors are transported from the base of the cilium to the site of their incorporation at the tip. The polypeptide is Intraflagellar transport protein 70A2 (Ift70a2) (Rattus norvegicus (Rat)).